The following is a 693-amino-acid chain: Elongation factor G (693 aa).

The tr-type G domain occupies 8 to 282 (KNTRNIGIMA…AVIDYLPSPL (275 aa)). GTP contacts are provided by residues 17-24 (AHIDAGKT), 81-85 (DTPGH), and 135-138 (NKMD).

This sequence belongs to the TRAFAC class translation factor GTPase superfamily. Classic translation factor GTPase family. EF-G/EF-2 subfamily.

It is found in the cytoplasm. Catalyzes the GTP-dependent ribosomal translocation step during translation elongation. During this step, the ribosome changes from the pre-translocational (PRE) to the post-translocational (POST) state as the newly formed A-site-bound peptidyl-tRNA and P-site-bound deacylated tRNA move to the P and E sites, respectively. Catalyzes the coordinated movement of the two tRNA molecules, the mRNA and conformational changes in the ribosome. This chain is Elongation factor G, found in Staphylococcus epidermidis (strain ATCC 35984 / DSM 28319 / BCRC 17069 / CCUG 31568 / BM 3577 / RP62A).